The sequence spans 249 residues: Triosephosphate isomerase (249 aa).

9–11 (NWK) is a substrate binding site. The Electrophile role is filled by histidine 94. Residue glutamate 166 is the Proton acceptor of the active site. Residues glycine 172, serine 212, and 233-234 (GG) contribute to the substrate site.

This sequence belongs to the triosephosphate isomerase family. Homodimer.

Its subcellular location is the cytoplasm. The enzyme catalyses D-glyceraldehyde 3-phosphate = dihydroxyacetone phosphate. It functions in the pathway carbohydrate biosynthesis; gluconeogenesis. Its pathway is carbohydrate degradation; glycolysis; D-glyceraldehyde 3-phosphate from glycerone phosphate: step 1/1. In terms of biological role, involved in the gluconeogenesis. Catalyzes stereospecifically the conversion of dihydroxyacetone phosphate (DHAP) to D-glyceraldehyde-3-phosphate (G3P). This is Triosephosphate isomerase from Treponema pallidum (strain Nichols).